A 384-amino-acid chain; its full sequence is Guanine nucleotide-binding protein alpha-1 subunit (384 aa).

Residue glycine 2 is the site of N-myristoyl glycine attachment. The S-palmitoyl cysteine moiety is linked to residue cysteine 5. The G-alpha domain maps to 38 to 384 (HIQKLLLLGA…RRNLFEAGLL (347 aa)). Residues 41-54 (KLLLLGAGESGKST) are G1 motif. GTP is bound by residues glutamate 49, serine 50, glycine 51, lysine 52, serine 53, threonine 54, leucine 188, tyrosine 189, threonine 194, glycine 222, asparagine 288, lysine 289, aspartate 291, and alanine 356. Residue serine 53 participates in Mg(2+) binding. The G2 motif stretch occupies residues 186-194 (DVLYARVRT). Residue threonine 194 coordinates Mg(2+). The G3 motif stretch occupies residues 215 to 224 (YRLFDVGGQR). Positions 284–291 (MLFLNKFD) are G4 motif. The segment at 354–359 (TTALDQ) is G5 motif.

Belongs to the G-alpha family. G proteins are composed of 3 units; alpha, beta and gamma. The alpha chain contains the guanine nucleotide binding site. Mg(2+) is required as a cofactor.

Guanine nucleotide-binding proteins (G proteins) are involved as modulators or transducers in various transmembrane signaling systems. The chain is Guanine nucleotide-binding protein alpha-1 subunit (GPA1) from Lupinus luteus (European yellow lupine).